Reading from the N-terminus, the 571-residue chain is Sulfite reductase [NADPH] hemoprotein beta-component (571 aa).

The [4Fe-4S] cluster site is built by C435, C441, C480, and C484. C484 serves as a coordination point for siroheme.

The protein belongs to the nitrite and sulfite reductase 4Fe-4S domain family. Alpha(8)-beta(8). The alpha component is a flavoprotein, the beta component is a hemoprotein. The cofactor is siroheme. [4Fe-4S] cluster is required as a cofactor.

It catalyses the reaction hydrogen sulfide + 3 NADP(+) + 3 H2O = sulfite + 3 NADPH + 4 H(+). The protein operates within sulfur metabolism; hydrogen sulfide biosynthesis; hydrogen sulfide from sulfite (NADPH route): step 1/1. In terms of biological role, component of the sulfite reductase complex that catalyzes the 6-electron reduction of sulfite to sulfide. This is one of several activities required for the biosynthesis of L-cysteine from sulfate. This is Sulfite reductase [NADPH] hemoprotein beta-component from Musicola paradisiaca (strain Ech703) (Dickeya paradisiaca).